Here is a 1036-residue protein sequence, read N- to C-terminus: Hexagonally packed intermediate-layer surface protein (1036 aa).

The N-terminal stretch at 1 to 17 (MKKNIALMALTGVLTLA) is a signal peptide. 3 disulfide bridges follow: Cys74-Cys86, Cys256-Cys275, and Cys642-Cys754.

Post-translationally, glycosylated; contains six glycans. In terms of processing, acylated in the N-terminal region. The N-terminus is blocked.

It is found in the secreted. It localises to the cell wall. The protein localises to the S-layer. Its function is as follows. Shape maintenance, possible protection from noxious enzymes or exogenous and unsettling DNA, and may mediate homotypic cell-cell contacts. The protein is Hexagonally packed intermediate-layer surface protein (hpi) of Deinococcus radiodurans.